The chain runs to 394 residues: Methane monooxygenase component A beta chain (394 aa).

In terms of assembly, m.trichosporium has two forms of methane monooxygenase, a soluble and a membrane-bound type. The soluble type consists of four components (A to D): protein A, comprising three chains, in an alpha-2, beta-2, gamma-2 configuration, is a nonheme iron protein containing an unusual mu-hydroxo bridge structure at its active site and interacts with both oxygen and methane.

The catalysed reaction is methane + NADH + O2 + H(+) = methanol + NAD(+) + H2O. It carries out the reaction methane + NADPH + O2 + H(+) = methanol + NADP(+) + H2O. In terms of biological role, responsible for the initial oxygenation of methane to methanol in methanotrophs. It also catalyzes the monohydroxylation of a variety of unactivated alkenes, alicyclic, aromatic and heterocyclic compounds. The sequence is that of Methane monooxygenase component A beta chain (mmoY) from Methylosinus trichosporium.